The sequence spans 252 residues: Probable transcriptional regulatory protein THA_1246 (252 aa).

Belongs to the TACO1 family.

Its subcellular location is the cytoplasm. This chain is Probable transcriptional regulatory protein THA_1246, found in Thermosipho africanus (strain TCF52B).